A 213-amino-acid chain; its full sequence is 3-isopropylmalate dehydratase small subunit (213 aa).

Belongs to the LeuD family. LeuD type 1 subfamily. Heterodimer of LeuC and LeuD.

It catalyses the reaction (2R,3S)-3-isopropylmalate = (2S)-2-isopropylmalate. It participates in amino-acid biosynthesis; L-leucine biosynthesis; L-leucine from 3-methyl-2-oxobutanoate: step 2/4. Functionally, catalyzes the isomerization between 2-isopropylmalate and 3-isopropylmalate, via the formation of 2-isopropylmaleate. This chain is 3-isopropylmalate dehydratase small subunit, found in Aromatoleum aromaticum (strain DSM 19018 / LMG 30748 / EbN1) (Azoarcus sp. (strain EbN1)).